A 478-amino-acid polypeptide reads, in one-letter code: Ribosome biogenesis protein NOP53 (478 aa).

Positions 1 to 10 (MAAGGSGVGG) are enriched in gly residues. The segment at 1-51 (MAAGGSGVGGKRSSKSDADSGFLGLRPTSVDPALRRRRRGPRNKKRGWRRL) is disordered. N-acetylalanine is present on Ala-2. The residue at position 29 (Ser-29) is a Phosphoserine. Residues 35-49 (RRRRRGPRNKKRGWR) are compositionally biased toward basic residues. Residues Ser-93 and Ser-305 each carry the phosphoserine modification. The mediates interaction with CDKN2A/isoform tumor suppressor ARF stretch occupies residues 148 to 431 (KEQLWEKLAK…SELTDSLRTL (284 aa)). Residues 181-478 (KPGPQDTVER…EKRAFREIQL (298 aa)) form a mediates interaction with NF2 region. A disordered region spans residues 303-344 (EESDGEGEPGQGEGPEAGDAEVCPTPARLATTEKKTEQQRRR). Positions 333–342 (TTEKKTEQQR) are enriched in basic and acidic residues. The interval 342–386 (RRREKAVHRLRVQQAALRAARLRHQELFRLRGIKAQVALRLAELA) is mediates interaction with human herpesvirus 8 protein ORF16. 2 nucleolar localization signal regions span residues 347–395 (AVHR…RQAR) and 396–478 (REAE…EIQL).

This sequence belongs to the NOP53 family. Homooligomer. Interacts with PTEN; regulates PTEN phosphorylation and increases its stability. Interacts with RPL11; retains RPL11 into the nucleolus. Interacts with CDKN2A/isoform tumor suppressor ARF; the interaction is direct and promotes ARF nucleoplasmic relocalization and ubiquitin-mediated proteasomal degradation. Interacts with NPM1; the interaction is direct and competitive with MYC. Interacts with NF2 (via FERM domain); the interaction is direct. Interacts with p53/TP53 (via the oligomerization region); the interaction is direct and may prevent the MDM2-mediated proteasomal degradation of p53/TP53. Interacts with RIGI; may regulate RIGI through USP15-mediated 'Lys-63'-linked deubiquitination. Interacts with UBTF. As to quaternary structure, (Microbial infection) Interacts with herpes simplex virus 1 early proteins ICP22 and ICP0. In terms of assembly, (Microbial infection) Interacts with Human herpesvirus 8 protein ORF16; may sequester ORF16 in host nucleolus and reduce its antiapoptotic activity. In terms of processing, ubiquitin-mediated proteasomal degradation is regulated by c-JUN. It is associated with relocalization to the nucleoplasm and decreased homooligomerization. Phosphorylated upon DNA damage probably by ATM and DNA-PK; may regulate NOP53 degradation. As to expression, expressed at high levels in heart and pancreas, moderate levels in placenta, liver, skeletal muscle, and kidney, and low levels in brain and lung.

It localises to the nucleus. Its subcellular location is the nucleolus. It is found in the nucleoplasm. Its function is as follows. Nucleolar protein which is involved in the integration of the 5S RNP into the ribosomal large subunit during ribosome biogenesis. In ribosome biogenesis, may also play a role in rRNA transcription. Also functions as a nucleolar sensor that regulates the activation of p53/TP53 in response to ribosome biogenesis perturbation, DNA damage and other stress conditions. DNA damage or perturbation of ribosome biogenesis disrupt the interaction between NOP53 and RPL11 allowing RPL11 transport to the nucleoplasm where it can inhibit MDM2 and allow p53/TP53 activation. It may also positively regulate the function of p53/TP53 in cell cycle arrest and apoptosis through direct interaction, preventing its MDM2-dependent ubiquitin-mediated proteasomal degradation. Originally identified as a tumor suppressor, it may also play a role in cell proliferation and apoptosis by positively regulating the stability of PTEN, thereby antagonizing the PI3K-AKT/PKB signaling pathway. May also inhibit cell proliferation and increase apoptosis through its interaction with NF2. May negatively regulate NPM1 by regulating its nucleoplasmic localization, oligomerization and ubiquitin-mediated proteasomal degradation. Thereby, may prevent NPM1 interaction with MYC and negatively regulate transcription mediated by the MYC-NPM1 complex. May also regulate cellular aerobic respiration. In the cellular response to viral infection, may play a role in the attenuation of interferon-beta through the inhibition of RIGI. In Homo sapiens (Human), this protein is Ribosome biogenesis protein NOP53.